A 700-amino-acid polypeptide reads, in one-letter code: Calpain-2 catalytic subunit (700 aa).

A2 bears the N-acetylalanine mark. Positions 2–19 (AGIAIKLAKDREAAEGLG) are cleaved as a propeptide — anchors to the small subunit. The Calpain catalytic domain maps to 45–344 (LFQDPSFPAL…YSRLEICNLT (300 aa)). Ca(2+) contacts are provided by I89, G91, and D96. Residue C105 is part of the active site. Residues E175, Q229, and K230 each contribute to the Ca(2+) site. Residues H262 and N286 contribute to the active site. Residues E292, D299, Q319, and E323 each coordinate Ca(2+). The segment at 345–514 (PDTLTCDSYK…KKADYQAVDD (170 aa)) is domain III. Residues 515–529 (EIEANIEEIDANEED) form a linker region. Residues 530–700 (IDDGFRRLFV…LASWLSFSVL (171 aa)) form a domain IV region. Ca(2+) is bound by residues A542, D545, E547, E552, D585, D587, S589, K591, E596, D615, D617, S619, T621, E626, D658, and N661. 2 EF-hand domains span residues 572–605 (FSIE…TKIQ) and 602–637 (TKIQ…AGFK).

This sequence belongs to the peptidase C2 family. Forms a heterodimer with a small (regulatory) subunit (CAPNS1). Interacts with CPEB3; this leads to cleavage of CPEB3. It depends on Ca(2+) as a cofactor. In terms of tissue distribution, ubiquitous.

The protein localises to the cytoplasm. It localises to the cell membrane. It carries out the reaction Broad endopeptidase specificity.. Activated by 200-1000 micromolar concentrations of calcium and inhibited by calpastatin. Its function is as follows. Calcium-regulated non-lysosomal thiol-protease which catalyzes limited proteolysis of substrates involved in cytoskeletal remodeling and signal transduction. Proteolytically cleaves MYOC at 'Arg-226'. Proteolytically cleaves CPEB3 following neuronal stimulation which abolishes CPEB3 translational repressor activity, leading to translation of CPEB3 target mRNAs. The chain is Calpain-2 catalytic subunit (Capn2) from Mus musculus (Mouse).